Reading from the N-terminus, the 53-residue chain is ATP synthase F(0) complex subunit 8 (53 aa).

A helical transmembrane segment spans residues 8 to 24 (PWLTTFLIVWISLIVIL).

It belongs to the ATPase protein 8 family. In terms of assembly, component of the ATP synthase complex composed at least of ATP5F1A/subunit alpha, ATP5F1B/subunit beta, ATP5MC1/subunit c (homooctomer), MT-ATP6/subunit a, MT-ATP8/subunit 8, ATP5ME/subunit e, ATP5MF/subunit f, ATP5MG/subunit g, ATP5MK/subunit k, ATP5MJ/subunit j, ATP5F1C/subunit gamma, ATP5F1D/subunit delta, ATP5F1E/subunit epsilon, ATP5PF/subunit F6, ATP5PB/subunit b, ATP5PD/subunit d, ATP5PO/subunit OSCP. ATP synthase complex consists of a soluble F(1) head domain (subunits alpha(3) and beta(3)) - the catalytic core - and a membrane F(0) domain - the membrane proton channel (subunits c, a, 8, e, f, g, k and j). These two domains are linked by a central stalk (subunits gamma, delta, and epsilon) rotating inside the F1 region and a stationary peripheral stalk (subunits F6, b, d, and OSCP).

It localises to the mitochondrion membrane. Functionally, subunit 8, of the mitochondrial membrane ATP synthase complex (F(1)F(0) ATP synthase or Complex V) that produces ATP from ADP in the presence of a proton gradient across the membrane which is generated by electron transport complexes of the respiratory chain. ATP synthase complex consist of a soluble F(1) head domain - the catalytic core - and a membrane F(1) domain - the membrane proton channel. These two domains are linked by a central stalk rotating inside the F(1) region and a stationary peripheral stalk. During catalysis, ATP synthesis in the catalytic domain of F(1) is coupled via a rotary mechanism of the central stalk subunits to proton translocation. In vivo, can only synthesize ATP although its ATP hydrolase activity can be activated artificially in vitro. Part of the complex F(0) domain. The protein is ATP synthase F(0) complex subunit 8 of Alligator mississippiensis (American alligator).